The primary structure comprises 260 residues: GDNF family receptor alpha-4 (260 aa).

An N-terminal signal peptide occupies residues M1 to G23. The N-linked (GlcNAc...) asparagine glycan is linked to N184. The GPI-anchor amidated threonine moiety is linked to residue T237. Positions A238–L260 are cleaved as a propeptide — removed in mature form.

The protein belongs to the GDNFR family. As to quaternary structure, interacts with ARTN ligand and RET: forms a 2:2:2 ternary complex composed of ARTN ligand, GFRA3 and RET receptor. Interacts with SORL1. In terms of tissue distribution, expressed in many tissues including adrenal medulla, brain neurons, with highest levels in the cerebral cortex and hippocampus. Moderate levels found in the gut circular muscle and myenteric ganglia as well as in other peripheral ganglia, including the sensory dorsal root and trigeminal as well as superior cervical and sympathetic chain ganglia. Isoform a1, isoform a2, isoform b1 and isoform b2 are exclusively found in the thyroid, parthyroid and pituitary glands.

It localises to the cell membrane. The protein resides in the secreted. In terms of biological role, receptor for persephin (PSPN), a growth factor that exhibits neurotrophic activity on mesencephalic dopaminergic and motor neurons. Acts by binding to its coreceptor, GFRA4, leading to autophosphorylation and activation of the RET receptor. May be important in C-cell development and, in the postnatal development of the adrenal medulla. This is GDNF family receptor alpha-4 (Gfra4) from Mus musculus (Mouse).